The primary structure comprises 310 residues: Terpene synthase 6 (310 aa).

Positions 93 to 98 (DDFYFE) match the DDxx(x)D/E motif motif. The NDxxSxxxD/E motif motif lies at 222-230 (NDCYSFNKE).

It belongs to the terpene synthase family.

It catalyses the reaction (2E,6E)-farnesyl diphosphate = (E)-beta-farnesene + diphosphate. It carries out the reaction (2E,6E)-farnesyl diphosphate = (1S,2S,4R)-beta-elemene + diphosphate. The enzyme catalyses (2E,6E)-farnesyl diphosphate = (3E,6E)-alpha-farnesene + diphosphate. Terpene synthase that converts its substrate farnesyl diphosphate (FPP) into the sesquiterpenes beta-elemene, (E)-beta-farnesene and (E,E)-alpha-farnesene. The protein is Terpene synthase 6 of Dictyostelium purpureum (Slime mold).